The primary structure comprises 250 residues: Probable transcriptional regulatory protein Cvib_1432 (250 aa).

It belongs to the TACO1 family.

It localises to the cytoplasm. The chain is Probable transcriptional regulatory protein Cvib_1432 from Chlorobium phaeovibrioides (strain DSM 265 / 1930) (Prosthecochloris vibrioformis (strain DSM 265)).